The chain runs to 113 residues: Urotensin-2B (113 aa).

An N-terminal signal peptide occupies residues 1–27 (MKVFSTSLWCGLLTLLSVMNLFKSVRG). Residues 28–103 (RPHLSSGHEL…LDNLSSSHTK (76 aa)) constitute a propeptide that is removed on maturation. Cysteine 107 and cysteine 112 are oxidised to a cystine.

Belongs to the urotensin-2 family.

It localises to the secreted. In terms of biological role, potent vasoconstrictor. The polypeptide is Urotensin-2B (Uts2b) (Mus musculus (Mouse)).